Consider the following 273-residue polypeptide: MSDMRLIVAGAGGRMGRALIRAITESAGATIVGALEAPTSKWLGEDAGTLAGLPANGVKLSADLWALSADADGILDFTVPAATLANVAIAAQRGLVHVIGTTGLSASDDAVIKSVTNQAVVVKSGNMSLGVNLLAALVKQVAKSLDDNFDIEIVEMHHKAKVDAPSGTALLLGEAAAWGRGIDLNAHSARGRDGVTGARRAGDIGFASLRGGTVTGDHTVIFAGPYERIELTHKAEDRMIFANGALKAALWARGRAPGLYSMADVLGLGNAST.

NAD(+) is bound by residues 10-15 (GAGGRM), Glu-36, 100-102 (GTT), and 124-127 (SGNM). His-157 (proton donor/acceptor) is an active-site residue. His-158 lines the (S)-2,3,4,5-tetrahydrodipicolinate pocket. The Proton donor role is filled by Lys-161. 167–168 (GT) contributes to the (S)-2,3,4,5-tetrahydrodipicolinate binding site.

It belongs to the DapB family.

Its subcellular location is the cytoplasm. It carries out the reaction (S)-2,3,4,5-tetrahydrodipicolinate + NAD(+) + H2O = (2S,4S)-4-hydroxy-2,3,4,5-tetrahydrodipicolinate + NADH + H(+). It catalyses the reaction (S)-2,3,4,5-tetrahydrodipicolinate + NADP(+) + H2O = (2S,4S)-4-hydroxy-2,3,4,5-tetrahydrodipicolinate + NADPH + H(+). It functions in the pathway amino-acid biosynthesis; L-lysine biosynthesis via DAP pathway; (S)-tetrahydrodipicolinate from L-aspartate: step 4/4. In terms of biological role, catalyzes the conversion of 4-hydroxy-tetrahydrodipicolinate (HTPA) to tetrahydrodipicolinate. This Rhodopseudomonas palustris (strain BisA53) protein is 4-hydroxy-tetrahydrodipicolinate reductase.